The sequence spans 466 residues: ATP synthase subunit beta (466 aa).

ATP is bound at residue 148–155; that stretch reads GGAGVGKT.

The protein belongs to the ATPase alpha/beta chains family. As to quaternary structure, F-type ATPases have 2 components, CF(1) - the catalytic core - and CF(0) - the membrane proton channel. CF(1) has five subunits: alpha(3), beta(3), gamma(1), delta(1), epsilon(1). CF(0) has three main subunits: a(1), b(2) and c(9-12). The alpha and beta chains form an alternating ring which encloses part of the gamma chain. CF(1) is attached to CF(0) by a central stalk formed by the gamma and epsilon chains, while a peripheral stalk is formed by the delta and b chains.

Its subcellular location is the cell inner membrane. The enzyme catalyses ATP + H2O + 4 H(+)(in) = ADP + phosphate + 5 H(+)(out). In terms of biological role, produces ATP from ADP in the presence of a proton gradient across the membrane. The catalytic sites are hosted primarily by the beta subunits. The chain is ATP synthase subunit beta from Xylella fastidiosa (strain M23).